The chain runs to 445 residues: NADH-quinone oxidoreductase subunit F (445 aa).

Glycine 61–glycine 70 is a binding site for NAD(+). Position 177-224 (glycine 177–threonine 224) interacts with FMN. [4Fe-4S] cluster is bound by residues cysteine 353, cysteine 356, cysteine 359, and cysteine 399.

The protein belongs to the complex I 51 kDa subunit family. It depends on FMN as a cofactor. Requires [4Fe-4S] cluster as cofactor.

The catalysed reaction is a quinone + NADH + 5 H(+)(in) = a quinol + NAD(+) + 4 H(+)(out). Functionally, NDH-1 shuttles electrons from NADH, via FMN and iron-sulfur (Fe-S) centers, to quinones in the respiratory chain. The immediate electron acceptor for the enzyme in this species is believed to be menaquinone. Couples the redox reaction to proton translocation (for every two electrons transferred, four hydrogen ions are translocated across the cytoplasmic membrane), and thus conserves the redox energy in a proton gradient. This chain is NADH-quinone oxidoreductase subunit F (nuoF), found in Mycobacterium bovis (strain ATCC BAA-935 / AF2122/97).